A 374-amino-acid chain; its full sequence is Envelope glycoprotein M (374 aa).

Topologically, residues 1–16 are intravirion; it reads MKSSKKDIFILHIWLK. A helical membrane pass occupies residues 17-37; sequence LMGCYVFMFITSVVLPIAAMF. Residues 38-82 lie on the Virion surface side of the membrane; it reads PNLGFPCYYNTLVDYSKLNLREKNQAQHLTPTLFLEAPEMFFYVT. The helical transmembrane segment at 83 to 103 threads the bilayer; that stretch reads YSFIVDCCSLVYYALAAVAVV. The Intravirion segment spans residues 104–117; it reads KAKKHAPGLMALSQ. The chain crosses the membrane as a helical span at residues 118–138; it reads WIMAVGSPTLLYMAVLKLWTI. Topologically, residues 139–149 are virion surface; that stretch reads QLYIHTLSYKH. The chain crosses the membrane as a helical span at residues 150–170; the sequence is IYLAAFVYCLHWLLSMVYTEC. At 171–207 the chain is on the intravirion side; sequence YITNVSSQWTSSELKKTIPENILLYRVVHVLKPIMMN. Residues 208–228 form a helical membrane-spanning segment; the sequence is VHLSVVALETLIFCLSFMMAI. The Virion surface segment spans residues 229–238; that stretch reads GNSFYVMVSD. A helical membrane pass occupies residues 239 to 259; sequence IVFGAINLYLILPIIWYFVTE. Residues 260–269 lie on the Intravirion side of the membrane; it reads FWLSKYLPRQ. A helical membrane pass occupies residues 270–290; it reads FGFYFGVLVASIILILPVVRY. Topologically, residues 291-301 are virion surface; sequence DKIFVAAQIHR. Residues 302–322 traverse the membrane as a helical segment; that stretch reads AVSINIAMIPLCALVALLVRA. Residues 323-374 are Intravirion-facing; it reads CRVYTDRKKIAYTALPSKPQTIKYTKPIEPSTKQAPDSSIFLEEESDTDFEQ. A disordered region spans residues 345 to 374; it reads KYTKPIEPSTKQAPDSSIFLEEESDTDFEQ. A compositionally biased stretch (acidic residues) spans 364 to 374; that stretch reads LEEESDTDFEQ.

Belongs to the herpesviridae glycoprotein M family. In terms of assembly, interacts (via N-terminus) with gN (via N-terminus). The gM-gN heterodimer forms the gCII complex.

The protein resides in the virion membrane. It is found in the host Golgi apparatus. Its subcellular location is the host trans-Golgi network. It localises to the host endosome membrane. The protein localises to the host nucleus inner membrane. Envelope glycoprotein important for virion assembly and egress. Plays a role in the correct incorporation of gH-gL into virion membrane. Directs the glycoprotein N (gN) to the host trans-Golgi network. In Connochaetes taurinus (Blue wildebeest), this protein is Envelope glycoprotein M.